We begin with the raw amino-acid sequence, 61 residues long: UPF0434 protein Avin_14770 (61 aa).

It belongs to the UPF0434 family.

The sequence is that of UPF0434 protein Avin_14770 from Azotobacter vinelandii (strain DJ / ATCC BAA-1303).